We begin with the raw amino-acid sequence, 490 residues long: Argininosuccinate lyase (490 aa).

Belongs to the lyase 1 family. Argininosuccinate lyase subfamily.

The protein resides in the cytoplasm. It catalyses the reaction 2-(N(omega)-L-arginino)succinate = fumarate + L-arginine. Its pathway is amino-acid biosynthesis; L-arginine biosynthesis; L-arginine from L-ornithine and carbamoyl phosphate: step 3/3. The chain is Argininosuccinate lyase from Bifidobacterium longum (strain DJO10A).